The primary structure comprises 573 residues: Glutamate--tRNA ligase (573 aa).

Residues 107-117 (PNPDGAFHLGN) carry the 'HIGH' region motif.

The protein belongs to the class-I aminoacyl-tRNA synthetase family. Glutamate--tRNA ligase type 2 subfamily.

The protein resides in the cytoplasm. The enzyme catalyses tRNA(Glu) + L-glutamate + ATP = L-glutamyl-tRNA(Glu) + AMP + diphosphate. In terms of biological role, catalyzes the attachment of glutamate to tRNA(Glu) in a two-step reaction: glutamate is first activated by ATP to form Glu-AMP and then transferred to the acceptor end of tRNA(Glu). In Thermococcus kodakarensis (strain ATCC BAA-918 / JCM 12380 / KOD1) (Pyrococcus kodakaraensis (strain KOD1)), this protein is Glutamate--tRNA ligase.